The following is a 610-amino-acid chain: GPI transamidase component GPI16 (610 aa).

A signal peptide spans 1–19 (MILTLAYFMLGTLLLGVFA). The Lumenal segment spans residues 20 to 551 (EDTVSQIGIN…STPDFSMPYN (532 aa)). N-linked (GlcNAc...) asparagine glycosylation is present at N184. The helical transmembrane segment at 552–572 (VIILTSTIMGLIFGMLYNLMV) threads the bilayer. Residues 573–610 (KRMVTVEEADKITLQSGLKYKLLKLKEKFLGKKKTKTD) are Cytoplasmic-facing.

Belongs to the PIGT family. In terms of assembly, forms a complex with CDC91, GPI17, GPI8 and GAA1. In terms of processing, the disulfide bond between GPI8 and GPI16 is important for normal enzyme activity.

The protein localises to the endoplasmic reticulum membrane. Its pathway is glycolipid biosynthesis; glycosylphosphatidylinositol-anchor biosynthesis. Component of the GPI transamidase complex. Involved in transfer of GPI to proteins. This is GPI transamidase component GPI16 (GPI16) from Saccharomyces cerevisiae (strain ATCC 204508 / S288c) (Baker's yeast).